Consider the following 270-residue polypeptide: Eukaryotic translation initiation factor 3 subunit G-1 (270 aa).

The RRM domain maps to 189–267 (AAIRISNLSE…LILSVEWSKP (79 aa)).

The protein belongs to the eIF-3 subunit G family. As to quaternary structure, component of the eukaryotic translation initiation factor 3 (eIF-3) complex. The eIF-3 complex interacts with pix.

It is found in the cytoplasm. Its function is as follows. RNA-binding component of the eukaryotic translation initiation factor 3 (eIF-3) complex, which is involved in protein synthesis of a specialized repertoire of mRNAs and, together with other initiation factors, stimulates binding of mRNA and methionyl-tRNAi to the 40S ribosome. The eIF-3 complex specifically targets and initiates translation of a subset of mRNAs involved in cell proliferation. This subunit can bind 18S rRNA. The sequence is that of Eukaryotic translation initiation factor 3 subunit G-1 from Drosophila ananassae (Fruit fly).